The following is a 334-amino-acid chain: F-box protein AUF1 (334 aa).

In terms of domain architecture, F-box spans 1 to 49 (MDAFDAIPDPVVIDILNRVGDVKTLIRCRSVSKRFNSLATQSESLLLQL).

Part of a SCF (ASK-cullin-F-box) protein ligase complex. Interacts with SKP1A/ASK1, SKP1B/ASK2, ASK11 and ASK13.

The protein resides in the nucleus. The protein operates within protein modification; protein ubiquitination. In terms of biological role, component of SCF(ASK-cullin-F-box) E3 ubiquitin ligase complexes, which may mediate the ubiquitination and subsequent proteasomal degradation of target proteins. Involved in the control of basipetal and acropetal auxin transport by promoting the distribution and expression of the auxin transporter PIN2. Promotes cytokinin-mediated cell expansion in the root elongation and differentiation zone, without affecting root cell division. In Arabidopsis thaliana (Mouse-ear cress), this protein is F-box protein AUF1.